The sequence spans 764 residues: Sesterfisherol synthase (764 aa).

The interval 2 to 331 is terpene cyclase; the sequence is EVWEHSRPIA…SPRHHAWRNN (330 aa). Residue Asp-95 coordinates Mg(2+). Residues Asp-95, 187 to 190, Asn-231, 235 to 239, and 324 to 325 each bind substrate; these read RRDD, SFDRE, and RH. Residues 95–99 carry the DDXXD 1 motif; it reads DDGYE. The NSE/DTE signature appears at 231–239; it reads NDYWSFDRE. Positions 332 to 759 are prenyltransferase; it reads SRNGLKPANH…PMLRLLLEKL (428 aa). The interval 347 to 372 is disordered; it reads LITPSNNLNSSKGSEEQMQDSDNGTR. Residues 348–358 show a composition bias toward polar residues; the sequence is ITPSNNLNSSK. The isopentenyl diphosphate site is built by Lys-476, Arg-479, and His-508. Mg(2+)-binding residues include Asp-515 and Asp-519. The DDXXD 2 motif lies at 515 to 519; sequence DDIED. Arg-524 serves as a coordination point for dimethylallyl diphosphate. Arg-525 serves as a coordination point for isopentenyl diphosphate. Dimethylallyl diphosphate-binding residues include Lys-602, Thr-603, Gln-638, Asn-645, Lys-655, and Lys-665.

It in the N-terminal section; belongs to the terpene synthase family. The protein in the C-terminal section; belongs to the FPP/GGPP synthase family. Hexamer. The cofactor is Mg(2+).

It catalyses the reaction isopentenyl diphosphate + (2E,6E)-farnesyl diphosphate = (2E,6E,10E)-geranylgeranyl diphosphate + diphosphate. The catalysed reaction is isopentenyl diphosphate + (2E,6E,10E)-geranylgeranyl diphosphate = (2E,6E,10E,14E)-geranylfarnesyl diphosphate + diphosphate. It carries out the reaction (2E,6E,10E,14E)-geranylfarnesyl diphosphate + H2O = sesterfisherol + diphosphate. It functions in the pathway secondary metabolite biosynthesis; terpenoid biosynthesis. Bifunctional terpene synthase; part of the gene cluster that mediates the biosynthesis of sesterfisheric acid. The bifunctional terpene synthase NfSS converts dimethylallyl diphosphate (DMAPP) and isopentenyl diphosphate (IPP) into sesterfisherol. The C-terminal prenyltransferase (PT) domain of NfSS catalyzes formation of geranylfarnesyl pyrophosphate (GFPP), whereas the N-terminal terpene cyclase (TC) domain catalyzes the cyclization of GFPP to sesterfisherol. The cytochrome P450 monooxygenase NfP450 then catalyzes oxidative modifications of sesterfisherol into sesterfisheric acid. The sequence is that of Sesterfisherol synthase from Neosartorya fischeri (strain ATCC 1020 / DSM 3700 / CBS 544.65 / FGSC A1164 / JCM 1740 / NRRL 181 / WB 181) (Aspergillus fischerianus).